A 185-amino-acid chain; its full sequence is Ribosome-recycling factor (185 aa).

Residues 127 to 158 form a disordered region; it reads AVRNTRQDANNKVKKLEKDKEISEDESKKAQE.

Belongs to the RRF family.

The protein resides in the cytoplasm. Its function is as follows. Responsible for the release of ribosomes from messenger RNA at the termination of protein biosynthesis. May increase the efficiency of translation by recycling ribosomes from one round of translation to another. The sequence is that of Ribosome-recycling factor from Helicobacter pylori (strain G27).